We begin with the raw amino-acid sequence, 361 residues long: Histidinol-phosphate aminotransferase (361 aa).

Residue lysine 224 is modified to N6-(pyridoxal phosphate)lysine.

The protein belongs to the class-II pyridoxal-phosphate-dependent aminotransferase family. Histidinol-phosphate aminotransferase subfamily. As to quaternary structure, homodimer. Requires pyridoxal 5'-phosphate as cofactor.

It carries out the reaction L-histidinol phosphate + 2-oxoglutarate = 3-(imidazol-4-yl)-2-oxopropyl phosphate + L-glutamate. It participates in amino-acid biosynthesis; L-histidine biosynthesis; L-histidine from 5-phospho-alpha-D-ribose 1-diphosphate: step 7/9. This chain is Histidinol-phosphate aminotransferase, found in Bacillus licheniformis (strain ATCC 14580 / DSM 13 / JCM 2505 / CCUG 7422 / NBRC 12200 / NCIMB 9375 / NCTC 10341 / NRRL NRS-1264 / Gibson 46).